We begin with the raw amino-acid sequence, 168 residues long: CDP-archaeol synthase (168 aa).

Transmembrane regions (helical) follow at residues 4–24 (IFEA…PVVL), 51–71 (GFFG…LMFP), 81–101 (VGVA…GSFI), 112–132 (PAVG…AYPL), and 138–158 (GEVL…NVFA).

Belongs to the CDP-archaeol synthase family. Mg(2+) serves as cofactor.

The protein resides in the cell membrane. The catalysed reaction is 2,3-bis-O-(geranylgeranyl)-sn-glycerol 1-phosphate + CTP + H(+) = CDP-2,3-bis-O-(geranylgeranyl)-sn-glycerol + diphosphate. It functions in the pathway membrane lipid metabolism; glycerophospholipid metabolism. Catalyzes the formation of CDP-2,3-bis-(O-geranylgeranyl)-sn-glycerol (CDP-archaeol) from 2,3-bis-(O-geranylgeranyl)-sn-glycerol 1-phosphate (DGGGP) and CTP. This reaction is the third ether-bond-formation step in the biosynthesis of archaeal membrane lipids. The protein is CDP-archaeol synthase of Pyrococcus abyssi (strain GE5 / Orsay).